The primary structure comprises 239 residues: MESPFYKKILLKLSGEALMGDQEFGISSDVIASYAKQIKEIVDLGVEVSIVIGGGNIFRGLSGAAQGVDRVTGDHMGMLATVINSLALQNSIEKLGVPTRVQTAIEMPKVAEPFIKRRAQRHLEKGRVVIFGAGTGNPYFTTDTAAALRAIEMETDVVIKATKVDGIYDKDPVKYPDAKKYQTVTYNEVLAKDLKVMDATAISLCRENKLPIIVFNSLDEGNLKKVVMGEHIGTTVVAD.

Residue K12–G15 coordinates ATP. G54 contributes to the UMP binding site. ATP contacts are provided by G55 and R59. Residues D74 and T135–T142 contribute to the UMP site. ATP is bound by residues T162, Y168, and D171.

This sequence belongs to the UMP kinase family. In terms of assembly, homohexamer.

It localises to the cytoplasm. The enzyme catalyses UMP + ATP = UDP + ADP. It functions in the pathway pyrimidine metabolism; CTP biosynthesis via de novo pathway; UDP from UMP (UMPK route): step 1/1. With respect to regulation, inhibited by UTP. Functionally, catalyzes the reversible phosphorylation of UMP to UDP. The polypeptide is Uridylate kinase (Fusobacterium nucleatum subsp. nucleatum (strain ATCC 25586 / DSM 15643 / BCRC 10681 / CIP 101130 / JCM 8532 / KCTC 2640 / LMG 13131 / VPI 4355)).